A 67-amino-acid chain; its full sequence is Metallothionein-A (67 aa).

This sequence belongs to the metallothionein superfamily. Type 4 family.

Metallothioneins have a high content of cysteine residues that bind various heavy metals. This is Metallothionein-A from Sphaerechinus granularis (Purple sea urchin).